A 249-amino-acid polypeptide reads, in one-letter code: Type-1Aa cytolytic delta-endotoxin (249 aa).

It belongs to the cyt1/cyt2 endotoxin family. In terms of processing, active after proteolytic processing.

Kills the larvae of dipteran insects by making pores in the epithelial cell membrane of the insect midgut. Acts on mosquitos and black flies. The sequence is that of Type-1Aa cytolytic delta-endotoxin (cyt1Aa) from Bacillus thuringiensis subsp. morrisoni.